A 155-amino-acid chain; its full sequence is Putative pre-16S rRNA nuclease (155 aa).

It belongs to the YqgF nuclease family.

It localises to the cytoplasm. Its function is as follows. Could be a nuclease involved in processing of the 5'-end of pre-16S rRNA. This Xylella fastidiosa (strain M23) protein is Putative pre-16S rRNA nuclease.